We begin with the raw amino-acid sequence, 297 residues long: Cbb3-type cytochrome c oxidase subunit CcoP (297 aa).

Residues 1 to 35 (MSKKPTTKKEVQTTGHQWDGIEELNTPLPRWWLWT) lie on the Cytoplasmic side of the membrane. The chain crosses the membrane as a helical span at residues 36-56 (FYATIIWGVAYSIAMPAWPIF). The Periplasmic segment spans residues 57–297 (SDKATPGLLG…SYVHSLGGGQ (241 aa)). Cytochrome c domains lie at 108–199 (YTRN…LQIS) and 206–294 (VKAT…HSLG). Positions 121, 124, 125, 174, 219, 222, 223, and 264 each coordinate heme c.

It belongs to the CcoP / FixP family. As to quaternary structure, component of the cbb3-type cytochrome c oxidase at least composed of CcoN, CcoO, CcoQ and CcoP. Interacts with CcoQ. Heme c is required as a cofactor.

The protein localises to the cell inner membrane. It functions in the pathway energy metabolism; oxidative phosphorylation. Functionally, C-type cytochrome. Part of the cbb3-type cytochrome c oxidase complex. CcoP subunit is required for transferring electrons from donor cytochrome c via its heme groups to CcoO subunit. From there, electrons are shuttled to the catalytic binuclear center of CcoN subunit where oxygen reduction takes place. The complex also functions as a proton pump. The polypeptide is Cbb3-type cytochrome c oxidase subunit CcoP (Rhodobacter capsulatus (Rhodopseudomonas capsulata)).